Here is a 197-residue protein sequence, read N- to C-terminus: Large ribosomal subunit protein mL58 (197 aa).

Residues 1–20 (MLFTIKPSFLKPVGFIQTRN) constitute a mitochondrion transit peptide.

It belongs to the mitochondrion-specific ribosomal protein mL58 family. As to quaternary structure, component of the mitochondrial large ribosomal subunit (mt-LSU). Mature yeast 74S mitochondrial ribosomes consist of a small (37S) and a large (54S) subunit. The 37S small subunit contains a 15S ribosomal RNA (15S mt-rRNA) and at least 32 different proteins. The 54S large subunit contains a 21S rRNA (21S mt-rRNA) and at least 45 different proteins.

The protein localises to the mitochondrion. Component of the mitochondrial ribosome (mitoribosome), a dedicated translation machinery responsible for the synthesis of mitochondrial genome-encoded proteins, including at least some of the essential transmembrane subunits of the mitochondrial respiratory chain. The mitoribosomes are attached to the mitochondrial inner membrane and translation products are cotranslationally integrated into the membrane. The sequence is that of Large ribosomal subunit protein mL58 (mrpl20) from Schizosaccharomyces pombe (strain 972 / ATCC 24843) (Fission yeast).